A 145-amino-acid chain; its full sequence is Hemoglobin subunit beta-2 (145 aa).

The region spanning 2–145 (HLTDQEIKYI…VADAVGKGYH (144 aa)) is the Globin domain. Residues His63 and His91 each coordinate heme b.

Belongs to the globin family. Red blood cells.

This Telmatobius peruvianus (Andean frog) protein is Hemoglobin subunit beta-2.